A 332-amino-acid chain; its full sequence is Adenosine receptor A2b (332 aa).

At M1–A8 the chain is on the extracellular side. The chain crosses the membrane as a helical span at residues L9–G33. The Cytoplasmic portion of the chain corresponds to A34–N43. Residues Y44–I67 traverse the membrane as a helical segment. Topologically, residues S68–C78 are extracellular. Cysteines 78 and 171 form a disulfide. A helical membrane pass occupies residues L79–V101. Residues D102 to R121 are Cytoplasmic-facing. A helical transmembrane segment spans residues A122–W144. Residues N145–P178 lie on the Extracellular side of the membrane. N-linked (GlcNAc...) asparagine glycosylation is found at N153 and N163. E174 serves as a coordination point for adenosine. Residues M179–I203 traverse the membrane as a helical segment. Topologically, residues K204–S235 are cytoplasmic. Residues L236–F259 form a helical membrane-spanning segment. N254 is an adenosine binding site. Residues H260–K267 lie on the Extracellular side of the membrane. Residues P268–A291 form a helical membrane-spanning segment. Residues S279 and H280 each coordinate adenosine. Over Y292–L332 the chain is Cytoplasmic. Residue C311 is the site of S-palmitoyl cysteine attachment.

The protein belongs to the G-protein coupled receptor 1 family.

The protein resides in the cell membrane. Its function is as follows. Receptor for adenosine. The activity of this receptor is mediated by G proteins which activate adenylyl cyclase. This is Adenosine receptor A2b (Adora2b) from Rattus norvegicus (Rat).